A 359-amino-acid polypeptide reads, in one-letter code: DNA replication and repair protein RecF (359 aa).

30-37 (GPNGSGKT) serves as a coordination point for ATP.

It belongs to the RecF family.

It localises to the cytoplasm. The RecF protein is involved in DNA metabolism; it is required for DNA replication and normal SOS inducibility. RecF binds preferentially to single-stranded, linear DNA. It also seems to bind ATP. The protein is DNA replication and repair protein RecF of Aliivibrio salmonicida (strain LFI1238) (Vibrio salmonicida (strain LFI1238)).